The chain runs to 102 residues: Small ribosomal subunit protein uS10 (102 aa).

A disordered region spans residues 33–59 (RMSGPIPLPTKRIRITTRKSPDGEGSA).

The protein belongs to the universal ribosomal protein uS10 family. As to quaternary structure, part of the 30S ribosomal subunit.

Functionally, involved in the binding of tRNA to the ribosomes. The protein is Small ribosomal subunit protein uS10 of Pyrococcus furiosus (strain ATCC 43587 / DSM 3638 / JCM 8422 / Vc1).